Consider the following 673-residue polypeptide: MTNYLLEIGLEEIPAHLVTPSINQLAERMEAFLNENRLKFDKIIKFSTPRRLALIVEELSDSSEAIDEEVKGPSAKIAKDAEGNWSKAIQGFSRGQGATPDDLILKGDYYYAKKHVDGVKSEEILSKVGDEVIAKMTFSTYMKWGNNDFLFVRPIQWIVSLLEDEIVAFDLLDVTANRFSRGHRFLANVEIELKNANDYASKMPENFVLVDAEHRKAEISAQILALASENNWQVTLHKDLLEEVNNIVEYPTAFVGSFDPKYLSVPAEVLVTSMRDNQRYFEVYNQEGQLAPNFISVRNGNAEHIENVVLGNEKVLFARLEDAEFFWKEDQKLKIEDLVAKLAKVTFHAKIGSITEHMARTKLIAAKLADIAGLTDEEKVDVARSAEIYKFDLLTGMVGEFDELQGVMGEKYALLAGENANVAAAIREHYMPTSADGQLPETKVGSVLAAADKIDSVLSFFNVGLIPSGSNDPYALRRAVQGLIRIIEKMNWHFDLSLFIDQFEGQNHAEILEFVKARVQKLLLEKLDRYDIVEAAINSSNFDITNMMESAFVIDGHKLHEPFKPAIENVSRSINLVKKAADIAEINPALFEEDTEQALYDAVISLQNQWTYKPCEEKFRAIVHMLAPAIEAFFDNVMVMAEDLAVRDNRIALLSEVVALTSVMADFSLINTK.

This sequence belongs to the class-II aminoacyl-tRNA synthetase family. In terms of assembly, tetramer of two alpha and two beta subunits.

It localises to the cytoplasm. The enzyme catalyses tRNA(Gly) + glycine + ATP = glycyl-tRNA(Gly) + AMP + diphosphate. The chain is Glycine--tRNA ligase beta subunit from Lactococcus lactis subsp. cremoris (strain MG1363).